We begin with the raw amino-acid sequence, 126 residues long: Small ribosomal subunit protein uS8 (126 aa).

The protein belongs to the universal ribosomal protein uS8 family. Part of the 30S ribosomal subunit. Contacts proteins S5 and S12.

Its function is as follows. One of the primary rRNA binding proteins, it binds directly to 16S rRNA central domain where it helps coordinate assembly of the platform of the 30S subunit. The chain is Small ribosomal subunit protein uS8 from Nitratidesulfovibrio vulgaris (strain DSM 19637 / Miyazaki F) (Desulfovibrio vulgaris).